The sequence spans 196 residues: Recombination protein RecR (196 aa).

The C4-type zinc finger occupies 55 to 70 (CELCGNLESESPCSIC). A Toprim domain is found at 78–173 (DIVCVVEEIT…KLSFLAHGIP (96 aa)).

This sequence belongs to the RecR family.

Its function is as follows. May play a role in DNA repair. It seems to be involved in an RecBC-independent recombinational process of DNA repair. It may act with RecF and RecO. The polypeptide is Recombination protein RecR (Neorickettsia sennetsu (strain ATCC VR-367 / Miyayama) (Ehrlichia sennetsu)).